A 685-amino-acid polypeptide reads, in one-letter code: UvrABC system protein B (685 aa).

In terms of domain architecture, Helicase ATP-binding spans 30–188 (DGVLRGDRWQ…QELVSLHYIR (159 aa)). 43–50 (GVTGSGKT) contacts ATP. Positions 96–119 (YYDFYQPEAYLPALDKYIAKDLRI) match the Beta-hairpin motif. The region spanning 435 to 597 (QIDDLLAEIR…ITPRSIRKSL (163 aa)) is the Helicase C-terminal domain. The region spanning 641–676 (YAMVAELRLEMNEAAIQMEYEKAAYLRDEIARLMHG) is the UVR domain.

The protein belongs to the UvrB family. As to quaternary structure, forms a heterotetramer with UvrA during the search for lesions. Interacts with UvrC in an incision complex.

It localises to the cytoplasm. In terms of biological role, the UvrABC repair system catalyzes the recognition and processing of DNA lesions. A damage recognition complex composed of 2 UvrA and 2 UvrB subunits scans DNA for abnormalities. Upon binding of the UvrA(2)B(2) complex to a putative damaged site, the DNA wraps around one UvrB monomer. DNA wrap is dependent on ATP binding by UvrB and probably causes local melting of the DNA helix, facilitating insertion of UvrB beta-hairpin between the DNA strands. Then UvrB probes one DNA strand for the presence of a lesion. If a lesion is found the UvrA subunits dissociate and the UvrB-DNA preincision complex is formed. This complex is subsequently bound by UvrC and the second UvrB is released. If no lesion is found, the DNA wraps around the other UvrB subunit that will check the other stand for damage. In Chlorobium phaeobacteroides (strain DSM 266 / SMG 266 / 2430), this protein is UvrABC system protein B.